The chain runs to 235 residues: Probable transcriptional regulatory protein CFF8240_0424 (235 aa).

The protein belongs to the TACO1 family.

It localises to the cytoplasm. The chain is Probable transcriptional regulatory protein CFF8240_0424 from Campylobacter fetus subsp. fetus (strain 82-40).